The primary structure comprises 313 residues: uncharacterized protein (313 aa).

Residues 1–313 are disordered; sequence MSRNGRNDYD…SSSRSGSSRR (313 aa). Basic and acidic residues-rich tracts occupy residues 24–33, 40–85, 95–116, and 156–181; these read LARDRERDSE, TGER…DVKY, TTRE…DELG, and TDER…DEFG. Basic residues predominate over residues 194-205; it reads RGRRSNSRRRSS. Composition is skewed to low complexity over residues 206-266 and 272-313; these read NARS…GSKS and SRSG…SSRR.

It localises to the virion. This is an uncharacterized protein from Acanthamoeba polyphaga mimivirus (APMV).